We begin with the raw amino-acid sequence, 249 residues long: Low affinity immunoglobulin gamma Fc region receptor III-A (249 aa).

An N-terminal signal peptide occupies residues 1–16; that stretch reads MWQLLPSTALLLVASA. Over 17–198 the chain is Extracellular; that stretch reads RPQAADLPKA…IQGPPVPSTS (182 aa). Ig-like C2-type domains follow at residues 24 to 104 and 119 to 172; these read PKAV…LEVH and EGEP…YFCR. 2 disulfides stabilise this stretch: Cys47-Cys88 and Cys127-Cys171. 4 N-linked (GlcNAc...) asparagine glycosylation sites follow: Asn55, Asn63, Asn166, and Asn179. A helical transmembrane segment spans residues 199–219; the sequence is ALLPFWPHIPFAVVMALLFAV. The Cytoplasmic portion of the chain corresponds to 220–249; sequence DTGLYFAMQRHLHNSKRAWENSKVSWKQDP.

In terms of assembly, forms a heterooligomeric complex with ITAM-containing signaling subunits FCER1G. Interacts (via transmembrane domain) with signaling subunits; this interaction is a prerequisite for receptor complex expression on the cell surface and intracellular signal transduction. Binds the Fc region of antigen-complexed IgG.

Its subcellular location is the cell membrane. Its function is as follows. Receptor for the invariable Fc fragment of immunoglobulin gamma (IgG). Optimally activated upon binding of clustered antigen-IgG complexes displayed on cell surfaces, triggers lysis of antibody-coated cells, a process known as antibody-dependent cellular cytotoxicity (ADCC). Does not bind free monomeric IgG, thus avoiding inappropriate effector cell activation in the absence of antigenic trigger. Mediates IgG effector functions on natural killer (NK) cells. Binds antigen-IgG complexes generated upon infection and triggers NK cell-dependent cytokine production and degranulation to limit viral load and propagation. Fc-binding subunit that associates with FCER1G adapter to form functional signaling complexes. Following the engagement of antigen-IgG complexes, triggers phosphorylation of immunoreceptor tyrosine-based activation motif (ITAM)-containing adapter with subsequent activation of phosphatidylinositol 3-kinase signaling and sustained elevation of intracellular calcium that ultimately drive NK cell activation. Mediates enhanced ADCC in response to afucosylated IgGs. This is Low affinity immunoglobulin gamma Fc region receptor III-A from Mustela putorius furo (European domestic ferret).